A 79-amino-acid chain; its full sequence is MFEKIRKILADIEDSQNEIEMLLKLANLSLGDFIEIKRGSMDMPKGVNEAFFTQLSEEVERLKELINALNKIKKGLLVF.

This is an uncharacterized protein from Helicobacter pylori (strain ATCC 700392 / 26695) (Campylobacter pylori).